The following is a 269-amino-acid chain: Thiazole synthase (269 aa).

The Schiff-base intermediate with DXP role is filled by Lys-105. Residues Gly-166, 192-193, and 214-215 contribute to the 1-deoxy-D-xylulose 5-phosphate site; these read AG and NT. Positions 245 to 269 are disordered; that stretch reads AMSAQDAAQPSTPVLGTPFWHHDHG.

This sequence belongs to the ThiG family. In terms of assembly, homotetramer. Forms heterodimers with either ThiH or ThiS.

The protein localises to the cytoplasm. It carries out the reaction [ThiS sulfur-carrier protein]-C-terminal-Gly-aminoethanethioate + 2-iminoacetate + 1-deoxy-D-xylulose 5-phosphate = [ThiS sulfur-carrier protein]-C-terminal Gly-Gly + 2-[(2R,5Z)-2-carboxy-4-methylthiazol-5(2H)-ylidene]ethyl phosphate + 2 H2O + H(+). It functions in the pathway cofactor biosynthesis; thiamine diphosphate biosynthesis. Its function is as follows. Catalyzes the rearrangement of 1-deoxy-D-xylulose 5-phosphate (DXP) to produce the thiazole phosphate moiety of thiamine. Sulfur is provided by the thiocarboxylate moiety of the carrier protein ThiS. In vitro, sulfur can be provided by H(2)S. The chain is Thiazole synthase from Paracidovorax citrulli (strain AAC00-1) (Acidovorax citrulli).